The chain runs to 396 residues: Elongation factor Tu (396 aa).

The tr-type G domain maps to 10–205; that stretch reads KTHANIGTIG…AVDDYIPTPE (196 aa). Residues 19-26 are G1; it reads GHVDHGKT. 19–26 provides a ligand contact to GTP; the sequence is GHVDHGKT. Thr-26 serves as a coordination point for Mg(2+). The G2 stretch occupies residues 61-65; the sequence is GITIS. Residues 82 to 85 form a G3 region; that stretch reads DCPG. Residues 82–86 and 137–140 each bind GTP; these read DCPGH and NKCD. The G4 stretch occupies residues 137–140; it reads NKCD. A G5 region spans residues 175 to 177; the sequence is SAL.

The protein belongs to the TRAFAC class translation factor GTPase superfamily. Classic translation factor GTPase family. EF-Tu/EF-1A subfamily. As to quaternary structure, monomer.

The protein resides in the cytoplasm. It catalyses the reaction GTP + H2O = GDP + phosphate + H(+). Its function is as follows. GTP hydrolase that promotes the GTP-dependent binding of aminoacyl-tRNA to the A-site of ribosomes during protein biosynthesis. This chain is Elongation factor Tu, found in Halalkalibacterium halodurans (strain ATCC BAA-125 / DSM 18197 / FERM 7344 / JCM 9153 / C-125) (Bacillus halodurans).